The sequence spans 77 residues: DinI-like protein in retron Ec67 (77 aa).

This sequence belongs to the DinI family.

This chain is DinI-like protein in retron Ec67, found in Escherichia coli.